The chain runs to 99 residues: Putative membrane protein insertion efficiency factor (99 aa).

Belongs to the UPF0161 family.

The protein localises to the cell membrane. Functionally, could be involved in insertion of integral membrane proteins into the membrane. The protein is Putative membrane protein insertion efficiency factor of Corynebacterium glutamicum (strain ATCC 13032 / DSM 20300 / JCM 1318 / BCRC 11384 / CCUG 27702 / LMG 3730 / NBRC 12168 / NCIMB 10025 / NRRL B-2784 / 534).